The primary structure comprises 285 residues: Stress response regulator protein 1 (285 aa).

Low complexity-rich tracts occupy residues 43-58 (DTSS…SSNN) and 128-138 (SIISSKSSNKS). 2 disordered regions span residues 43-66 (DTSS…SDQQ) and 114-142 (PLTP…TTVV). A Response regulatory domain is found at 158 to 276 (SFLIVDDNII…LDFMANSIDD (119 aa)). 4-aspartylphosphate is present on Asp209.

Its function is as follows. Required for stress adaptation, morphogenesis and virulence. The protein is Stress response regulator protein 1 (SRR1) of Candida dubliniensis (strain CD36 / ATCC MYA-646 / CBS 7987 / NCPF 3949 / NRRL Y-17841) (Yeast).